We begin with the raw amino-acid sequence, 715 residues long: Probable GTP diphosphokinase RSH3, chloroplastic (715 aa).

The transit peptide at Met-1–Ser-64 directs the protein to the chloroplast. Low complexity predominate over residues Ser-65–Ser-74. The segment at Ser-65–His-84 is disordered. One can recognise an HD domain in the interval Tyr-237–Met-341.

It belongs to the RelA/SpoT family. In terms of tissue distribution, expressed in roots, hypocotyls, shoots, cotyledons, rosette and cauline leaves, stems, petals, sepals, stamens, pistils and siliques.

It is found in the plastid. Its subcellular location is the chloroplast. It carries out the reaction GTP + ATP = guanosine 3'-diphosphate 5'-triphosphate + AMP. Functionally, possesses ppGpp (guanosine 3'-diphosphate 5'-diphosphate) synthetase activity in vitro and is able to functionally complement E.coli relA mutants. May be involved in a rapid plant ppGpp-mediated response to pathogens and other stresses. This chain is Probable GTP diphosphokinase RSH3, chloroplastic (RSH3), found in Arabidopsis thaliana (Mouse-ear cress).